Reading from the N-terminus, the 250-residue chain is UPF0524 protein C3orf70 homolog (250 aa).

The interval E201–V250 is disordered. Residues S202–E229 show a composition bias toward acidic residues.

This sequence belongs to the UPF0524 family.

Its function is as follows. May play a role in neuronal and neurobehavioral development. This Bos taurus (Bovine) protein is UPF0524 protein C3orf70 homolog.